The chain runs to 332 residues: L-lactate dehydrogenase A chain (332 aa).

A2 is subject to N-acetylalanine. K5 is subject to N6-acetyllysine; alternate. The residue at position 5 (K5) is an N6-succinyllysine; alternate. Y10 is subject to Phosphotyrosine. An N6-acetyllysine modification is found at K14. T18 carries the post-translational modification Phosphothreonine. 29–57 (GAVGMACAISILMKDLADELALVDVIEDK) is an NAD(+) binding site. K57 is subject to N6-acetyllysine; alternate. Residue K57 forms a Glycyl lysine isopeptide (Lys-Gly) (interchain with G-Cter in SUMO2); alternate linkage. K81 carries the post-translational modification N6-acetyllysine. NAD(+) is bound at residue R99. Substrate is bound at residue R106. At K118 the chain carries N6-acetyllysine; alternate. Residue K118 is modified to N6-succinyllysine; alternate. K126 carries the post-translational modification N6-acetyllysine. Residue N138 participates in NAD(+) binding. Positions 138 and 169 each coordinate substrate. The active-site Proton acceptor is the H193. N6-acetyllysine occurs at positions 224 and 232. A Phosphotyrosine modification is found at Y239. At K243 the chain carries N6-acetyllysine. Position 248 (T248) interacts with substrate. T309 carries the phosphothreonine modification. S310 is modified (phosphoserine). N6-acetyllysine; alternate is present on K318. K318 bears the N6-succinyllysine; alternate mark. T322 bears the Phosphothreonine mark.

Belongs to the LDH/MDH superfamily. LDH family. In terms of assembly, homotetramer. Interacts with PTEN upstream reading frame protein MP31. Interacts with folliculin FLCN; the interaction is direct and inhibits enzymatic activity. In terms of processing, ISGylated. As to expression, predominantly expressed in anaerobic tissues such as skeletal muscle and liver.

Its subcellular location is the cytoplasm. The catalysed reaction is (S)-lactate + NAD(+) = pyruvate + NADH + H(+). The protein operates within fermentation; pyruvate fermentation to lactate; (S)-lactate from pyruvate: step 1/1. Fermentation of pyruvate to lactate is inhibited when bound to folliculin FLCN, perhaps partly by FLCN preventing binding of cofactor NADH. Its function is as follows. Interconverts simultaneously and stereospecifically pyruvate and lactate with concomitant interconversion of NADH and NAD(+). The sequence is that of L-lactate dehydrogenase A chain from Homo sapiens (Human).